The sequence spans 582 residues: ATP-dependent lipid A-core flippase (582 aa).

A run of 5 helical transmembrane segments spans residues 15–35 (LWPI…ALVI), 68–88 (YVVV…SYCL), 140–160 (GALI…AVML), 161–181 (YTSW…AVLI), and 254–274 (VQII…VPTI). The region spanning 27-310 (VVSGIALVIN…LTNVNAQFQK (284 aa)) is the ABC transmembrane type-1 domain. Residues 342–578 (LSFKNVTFTY…NGAYKQLHHI (237 aa)) form the ABC transporter domain. An ATP-binding site is contributed by 376-383 (GRSGSGKS).

The protein belongs to the ABC transporter superfamily. Lipid exporter (TC 3.A.1.106) family. In terms of assembly, homodimer.

The protein resides in the cell inner membrane. It carries out the reaction ATP + H2O + lipid A-core oligosaccharideSide 1 = ADP + phosphate + lipid A-core oligosaccharideSide 2.. Its function is as follows. Involved in lipopolysaccharide (LPS) biosynthesis. Translocates lipid A-core from the inner to the outer leaflet of the inner membrane. Transmembrane domains (TMD) form a pore in the inner membrane and the ATP-binding domain (NBD) is responsible for energy generation. This Pasteurella multocida (strain Pm70) protein is ATP-dependent lipid A-core flippase.